A 1481-amino-acid polypeptide reads, in one-letter code: Protein shortage in chiasmata 1 ortholog (1481 aa).

Disordered stretches follow at residues 479–498 (TDVHQLHPQKRPIPSSEKEV) and 512–560 (KSKV…IQAS). The span at 513–531 (SKVEANPKNDQEPEARIMQ) shows a compositional bias: basic and acidic residues. Residues 543 to 560 (SSQVPSAESASSSQIQAS) show a composition bias toward low complexity.

This sequence belongs to the XPF family. Highly divergent. Interacts with TEX11. Interacts with SPO16. As to expression, mainly expressed in adult testis.

It is found in the chromosome. Its function is as follows. ATPase required during meiosis for the formation of crossover recombination intermediates. Binds DNA: preferentially binds to single-stranded DNA and DNA branched structures. Does not show nuclease activity in vitro, but shows ATPase activity, which is stimulated by the presence of single-stranded DNA. Plays a key role in homologous recombination and crossing-over in meiotic prophase I in male and female germ cells. Required for proper synaptonemal complex assembly and homologous chromosome pairing. Required for recruitment of TEX11 and MSH4 to recombination intermediates. The chain is Protein shortage in chiasmata 1 ortholog from Mus musculus (Mouse).